Here is a 201-residue protein sequence, read N- to C-terminus: dITP/XTP pyrophosphatase (201 aa).

7–12 (SNNAHK) is a substrate binding site. The Proton acceptor role is filled by D72. D72 contacts Mg(2+). Substrate-binding positions include S73, 154–157 (FGYD), K177, and 182–183 (HR).

The protein belongs to the HAM1 NTPase family. In terms of assembly, homodimer. Mg(2+) is required as a cofactor.

The enzyme catalyses XTP + H2O = XMP + diphosphate + H(+). It carries out the reaction dITP + H2O = dIMP + diphosphate + H(+). The catalysed reaction is ITP + H2O = IMP + diphosphate + H(+). Pyrophosphatase that catalyzes the hydrolysis of nucleoside triphosphates to their monophosphate derivatives, with a high preference for the non-canonical purine nucleotides XTP (xanthosine triphosphate), dITP (deoxyinosine triphosphate) and ITP. Seems to function as a house-cleaning enzyme that removes non-canonical purine nucleotides from the nucleotide pool, thus preventing their incorporation into DNA/RNA and avoiding chromosomal lesions. This Leuconostoc mesenteroides subsp. mesenteroides (strain ATCC 8293 / DSM 20343 / BCRC 11652 / CCM 1803 / JCM 6124 / NCDO 523 / NBRC 100496 / NCIMB 8023 / NCTC 12954 / NRRL B-1118 / 37Y) protein is dITP/XTP pyrophosphatase.